The following is a 421-amino-acid chain: WD repeat and SOCS box-containing protein 1 (421 aa).

WD repeat units follow at residues 32–71, 124–165, 168–208, 212–251, 254–293, and 309–346; these read KCGR…QNFL, SRCV…LLLN, DHTE…NMMK, GHQN…MIRK, GHHH…ILME, and ANDR…DYPV. Residues 372–421 form the SOCS box domain; it reads DGSVYFWATPRQVPSLQHLCRMSIRRVMPTQEVQELPIPSKLLEFLSYRI.

Interacts with DIO2. Component of the probable ECS(WSB1) E3 ubiquitin ligase complex which contains CUL5, RNF7/RBX2, Elongin BC complex and WSB1. Component of a probable ECS-like E3 ubiquitin-protein ligase complex which contains CUL5, RBX1, Elongin BC complex and WSB1. Interacts with CUL5, RNF7, ELOB and ELOC. Binds to HIPK2 through WD40 repeats.

Its pathway is protein modification; protein ubiquitination. Probable substrate-recognition component of a SCF-like ECS (Elongin-Cullin-SOCS-box protein) E3 ubiquitin ligase complex which mediates the ubiquitination and subsequent proteasomal degradation of target proteins. Recognizes type II iodothyronine deiodinase/DIO2. Confers constitutive instability to HIPK2 through proteasomal degradation. The protein is WD repeat and SOCS box-containing protein 1 (WSB1) of Homo sapiens (Human).